Here is a 59-residue protein sequence, read N- to C-terminus: MGKKKGKGAVELIALVCEETGIRNYTTTKNRRNKQEKLELMKYCPILRKHTLHKEGKIK.

It belongs to the bacterial ribosomal protein bL33 family.

This Borrelia turicatae (strain 91E135) protein is Large ribosomal subunit protein bL33.